Consider the following 266-residue polypeptide: 22 kDa alpha-zein 14 (266 aa).

Positions 1-21 (MATKILSLLALLALFASATNA) are cleaved as a signal peptide.

This sequence belongs to the zein family.

Functionally, zeins are major seed storage proteins. This Zea mays (Maize) protein is 22 kDa alpha-zein 14.